The chain runs to 270 residues: Orotidine 5'-phosphate decarboxylase (270 aa).

Lys-89 functions as the Proton donor in the catalytic mechanism.

Belongs to the OMP decarboxylase family. Type 2 subfamily.

It carries out the reaction orotidine 5'-phosphate + H(+) = UMP + CO2. It functions in the pathway pyrimidine metabolism; UMP biosynthesis via de novo pathway; UMP from orotate: step 2/2. The sequence is that of Orotidine 5'-phosphate decarboxylase from Dehalococcoides mccartyi (strain ATCC BAA-2266 / KCTC 15142 / 195) (Dehalococcoides ethenogenes (strain 195)).